A 439-amino-acid polypeptide reads, in one-letter code: Probable serine/threonine-protein kinase WNK6 (439 aa).

The tract at residues 1 to 30 (MMPPKPAAEDVADEQPEPPDEDPDVAEADP) is disordered. A compositionally biased stretch (acidic residues) spans 10 to 27 (DVADEQPEPPDEDPDVAE). A Protein kinase domain is found at 35–293 (LRYREIIGSG…ASELLKSPFL (259 aa)). Residues 116–119 (TELF) and lysine 166 contribute to the ATP site. The active-site Proton acceptor is the aspartate 183.

Belongs to the protein kinase superfamily. Ser/Thr protein kinase family. WNK subfamily.

The enzyme catalyses L-seryl-[protein] + ATP = O-phospho-L-seryl-[protein] + ADP + H(+). It carries out the reaction L-threonyl-[protein] + ATP = O-phospho-L-threonyl-[protein] + ADP + H(+). This Oryza sativa subsp. japonica (Rice) protein is Probable serine/threonine-protein kinase WNK6 (WNK6).